The following is a 314-amino-acid chain: tRNA dimethylallyltransferase (314 aa).

An ATP-binding site is contributed by 13–20 (GPTAVGKT). Residue 15 to 20 (TAVGKT) coordinates substrate. The interaction with substrate tRNA stretch occupies residues 38-41 (DSMQ).

The protein belongs to the IPP transferase family. Monomer. Mg(2+) is required as a cofactor.

The enzyme catalyses adenosine(37) in tRNA + dimethylallyl diphosphate = N(6)-dimethylallyladenosine(37) in tRNA + diphosphate. Catalyzes the transfer of a dimethylallyl group onto the adenine at position 37 in tRNAs that read codons beginning with uridine, leading to the formation of N6-(dimethylallyl)adenosine (i(6)A). The polypeptide is tRNA dimethylallyltransferase (Bacillus subtilis (strain 168)).